A 369-amino-acid polypeptide reads, in one-letter code: Maltose/maltodextrin import ATP-binding protein MalK (369 aa).

One can recognise an ABC transporter domain in the interval 4 to 234; that stretch reads VTLHNVSKAY…PVNRFVASFI (231 aa). Residue 36 to 43 participates in ATP binding; that stretch reads GPSGCGKS.

Belongs to the ABC transporter superfamily. Maltooligosaccharide importer (TC 3.A.1.1.1) family. In terms of assembly, the complex is composed of two ATP-binding proteins (MalK), two transmembrane proteins (MalG and MalK) and a solute-binding protein (MalE).

It localises to the cell inner membrane. It carries out the reaction D-maltose(out) + ATP + H2O = D-maltose(in) + ADP + phosphate + H(+). Its function is as follows. Part of the ABC transporter complex MalEFGK involved in maltose/maltodextrin import. Responsible for energy coupling to the transport system. The chain is Maltose/maltodextrin import ATP-binding protein MalK from Photorhabdus laumondii subsp. laumondii (strain DSM 15139 / CIP 105565 / TT01) (Photorhabdus luminescens subsp. laumondii).